The primary structure comprises 163 residues: UPF0763 protein CJJ81176_1011 (163 aa).

It belongs to the UPF0763 family.

The protein is UPF0763 protein CJJ81176_1011 of Campylobacter jejuni subsp. jejuni serotype O:23/36 (strain 81-176).